The sequence spans 41 residues: MKIRNSLKSLLGRHRDNRLVRRKGRVYIINKTQKRYKARQG.

It belongs to the bacterial ribosomal protein bL36 family.

The sequence is that of Large ribosomal subunit protein bL36 from Xanthobacter autotrophicus (strain ATCC BAA-1158 / Py2).